The primary structure comprises 73 residues: uncharacterized protein (73 aa).

This is an uncharacterized protein from Haemophilus influenzae (strain ATCC 51907 / DSM 11121 / KW20 / Rd).